The sequence spans 343 residues: Heme A synthase (343 aa).

8 consecutive transmembrane segments (helical) span residues 13-33, 96-116, 130-150, 161-181, 197-217, 258-278, 294-314, and 318-338; these read VAIW…VGGA, HRLL…VFLI, AMLG…SSGL, LMTH…TALD, GWAL…ALVA, FNHR…VVLA, AVAA…MAAV, and LGVL…AFAW. Residue H260 coordinates heme. H322 provides a ligand contact to heme.

The protein belongs to the COX15/CtaA family. Type 2 subfamily. In terms of assembly, interacts with CtaB. The cofactor is heme b.

The protein localises to the cell membrane. It catalyses the reaction Fe(II)-heme o + 2 A + H2O = Fe(II)-heme a + 2 AH2. It functions in the pathway porphyrin-containing compound metabolism; heme A biosynthesis; heme A from heme O: step 1/1. In terms of biological role, catalyzes the conversion of heme O to heme A by two successive hydroxylations of the methyl group at C8. The first hydroxylation forms heme I, the second hydroxylation results in an unstable dihydroxymethyl group, which spontaneously dehydrates, resulting in the formyl group of heme A. The polypeptide is Heme A synthase (Caulobacter vibrioides (strain ATCC 19089 / CIP 103742 / CB 15) (Caulobacter crescentus)).